A 184-amino-acid chain; its full sequence is UPF0215 protein MJ1150 (184 aa).

This sequence belongs to the UPF0215 family.

The sequence is that of UPF0215 protein MJ1150 from Methanocaldococcus jannaschii (strain ATCC 43067 / DSM 2661 / JAL-1 / JCM 10045 / NBRC 100440) (Methanococcus jannaschii).